Consider the following 154-residue polypeptide: Superoxide dismutase [Cu-Zn] (154 aa).

A Glycyl lysine isopeptide (Lys-Gly) (interchain with G-Cter in SUMO) cross-link involves residue Lys19. 2 positions are modified to phosphoserine: Ser26 and Ser39. Residue Glu43 participates in Zn(2+) binding. Cu cation is bound by residues His47, His49, and His64. A disulfide bridge links Cys58 with Cys147. His64 contributes to the Zn(2+) binding site. A Glycyl lysine isopeptide (Lys-Gly) (interchain with G-Cter in SUMO) cross-link involves residue Lys70. Zn(2+) is bound by residues His72, His81, and Asp84. Phosphoserine is present on residues Ser99 and Ser117. His121 provides a ligand contact to Cu cation. Phosphothreonine is present on residues Thr132 and Thr138. Substrate is bound at residue Arg144.

The protein belongs to the Cu-Zn superoxide dismutase family. Homodimer in holo form. In apo form, heterodimer with CCS1. Zinc-binding at 'His-16' of CCS1 and Glu-43 of apo-SOD1 is required for this heterodimerization. Cu cation is required as a cofactor. It depends on Zn(2+) as a cofactor.

The protein localises to the cytoplasm. It localises to the mitochondrion intermembrane space. The catalysed reaction is 2 superoxide + 2 H(+) = H2O2 + O2. Functionally, destroys radicals which are normally produced within the cells and which are toxic to biological systems. The chain is Superoxide dismutase [Cu-Zn] from Saccharomyces cerevisiae (strain ATCC 204508 / S288c) (Baker's yeast).